The chain runs to 416 residues: NADH-quinone oxidoreductase subunit D (416 aa).

The protein belongs to the complex I 49 kDa subunit family. In terms of assembly, NDH-1 is composed of 14 different subunits. Subunits NuoB, C, D, E, F, and G constitute the peripheral sector of the complex.

It localises to the cell inner membrane. It catalyses the reaction a quinone + NADH + 5 H(+)(in) = a quinol + NAD(+) + 4 H(+)(out). In terms of biological role, NDH-1 shuttles electrons from NADH, via FMN and iron-sulfur (Fe-S) centers, to quinones in the respiratory chain. The immediate electron acceptor for the enzyme in this species is believed to be ubiquinone. Couples the redox reaction to proton translocation (for every two electrons transferred, four hydrogen ions are translocated across the cytoplasmic membrane), and thus conserves the redox energy in a proton gradient. The chain is NADH-quinone oxidoreductase subunit D from Rhodopseudomonas palustris (strain BisB5).